The chain runs to 238 residues: MQLGVNVDHVATLRNLRSTAYPDVVRIASKAVECGADFITVHLREDRRHIRDGDVFALKKHLAVPLNLEMAATREMLEIAKKVAPRYVCLVPEKREEITTESGVDAKGMFEILAPVVSDLRQSGIGVTLFIEPEKEQVDYAKKLCADKVELHVGAYCLSKSQGELERIANAAAYSHEQGMECHAGHGIDYGTAATIATIRHVSALNVGHFLICESLLHGVGSAVRNMKKIILEQRHNA.

Asn6 contributes to the 3-amino-2-oxopropyl phosphate binding site. 8–9 provides a ligand contact to 1-deoxy-D-xylulose 5-phosphate; the sequence is DH. Position 17 (Arg17) interacts with 3-amino-2-oxopropyl phosphate. His42 acts as the Proton acceptor in catalysis. The 1-deoxy-D-xylulose 5-phosphate site is built by Arg44 and His49. The active-site Proton acceptor is Glu69. A 1-deoxy-D-xylulose 5-phosphate-binding site is contributed by Thr99. His186 acts as the Proton donor in catalysis. 3-amino-2-oxopropyl phosphate is bound by residues Gly187 and 208-209; that span reads GH.

Belongs to the PNP synthase family. In terms of assembly, homooctamer; tetramer of dimers.

The protein resides in the cytoplasm. The catalysed reaction is 3-amino-2-oxopropyl phosphate + 1-deoxy-D-xylulose 5-phosphate = pyridoxine 5'-phosphate + phosphate + 2 H2O + H(+). It participates in cofactor biosynthesis; pyridoxine 5'-phosphate biosynthesis; pyridoxine 5'-phosphate from D-erythrose 4-phosphate: step 5/5. Its function is as follows. Catalyzes the complicated ring closure reaction between the two acyclic compounds 1-deoxy-D-xylulose-5-phosphate (DXP) and 3-amino-2-oxopropyl phosphate (1-amino-acetone-3-phosphate or AAP) to form pyridoxine 5'-phosphate (PNP) and inorganic phosphate. This is Pyridoxine 5'-phosphate synthase from Anaplasma marginale (strain St. Maries).